We begin with the raw amino-acid sequence, 332 residues long: Glycerol-3-phosphate dehydrogenase [NAD(P)+] (332 aa).

NADPH is bound by residues serine 14, tryptophan 15, arginine 35, and lysine 107. Positions 107, 137, and 139 each coordinate sn-glycerol 3-phosphate. Alanine 141 contributes to the NADPH binding site. Lysine 192, aspartate 245, serine 255, arginine 256, and asparagine 257 together coordinate sn-glycerol 3-phosphate. The active-site Proton acceptor is the lysine 192. NADPH is bound at residue arginine 256. NADPH is bound by residues valine 280 and glutamate 282.

This sequence belongs to the NAD-dependent glycerol-3-phosphate dehydrogenase family.

It localises to the cytoplasm. It catalyses the reaction sn-glycerol 3-phosphate + NAD(+) = dihydroxyacetone phosphate + NADH + H(+). The enzyme catalyses sn-glycerol 3-phosphate + NADP(+) = dihydroxyacetone phosphate + NADPH + H(+). The protein operates within membrane lipid metabolism; glycerophospholipid metabolism. In terms of biological role, catalyzes the reduction of the glycolytic intermediate dihydroxyacetone phosphate (DHAP) to sn-glycerol 3-phosphate (G3P), the key precursor for phospholipid synthesis. The sequence is that of Glycerol-3-phosphate dehydrogenase [NAD(P)+] from Desulfovibrio desulfuricans (strain ATCC 27774 / DSM 6949 / MB).